Here is a 949-residue protein sequence, read N- to C-terminus: MAM domain-containing glycosylphosphatidylinositol anchor protein 1 (949 aa).

The N-terminal stretch at 1 to 18 (MEMICVLFLSLVPAYSRG) is a signal peptide. 2 consecutive Ig-like domains span residues 24-125 (PAQA…IRVD) and 132-230 (PVLT…KSIT). Residues Asn-42 and Asn-90 are each glycosylated (N-linked (GlcNAc...) asparagine). Cystine bridges form between Cys-60–Cys-108 and Cys-157–Cys-214. N-linked (GlcNAc...) asparagine glycosylation is found at Asn-235, Asn-247, Asn-257, Asn-292, Asn-307, and Asn-331. Residues 240–323 (PALKLSVNET…VGNPAKKTVN (84 aa)) form the Ig-like 3 domain. A disulfide bridge connects residues Cys-262 and Cys-308. Ig-like domains follow at residues 338 to 432 (PDVI…VEVN), 440 to 531 (PTIS…ALVQ), and 537 to 625 (PPVV…FQVS). A disulfide bridge connects residues Cys-357 and Cys-415. An N-linked (GlcNAc...) asparagine glycan is attached at Asn-432. 2 disulfide bridges follow: Cys-463–Cys-513 and Cys-559–Cys-609. Asn-577, Asn-649, and Asn-820 each carry an N-linked (GlcNAc...) asparagine glycan. Residues 637–737 (TPNPTLSQKQ…ARIIRYMEPI (101 aa)) enclose the Fibronectin type-III domain. The region spanning 745–912 (NTCRFEDEKI…VTLKKGDCPR (168 aa)) is the MAM domain. Ser-926 is lipidated: GPI-anchor amidated serine. Positions 927 to 949 (GVSAQHGPCLCGPLTFFLYVLLR) are cleaved as a propeptide — removed in mature form.

As to quaternary structure, interacts heterophilically through its MAM domain with proteins in axon-rich regions and through its Ig-like domains with proteins in differentiating muscle. As to expression, in the embryonic brachial spinal cord, selectively expressed by medial lateral motor column neurons, some populations of dorsal root ganglion neurons, and interneurons.

The protein resides in the cell membrane. Required for radial migration of cortical neurons in the superficial layer of the neocortex. This Gallus gallus (Chicken) protein is MAM domain-containing glycosylphosphatidylinositol anchor protein 1.